The primary structure comprises 1413 residues: DNA-directed RNA polymerase subunit beta' (1413 aa).

Cys-70, Cys-72, Cys-85, and Cys-88 together coordinate Zn(2+). Positions 460, 462, and 464 each coordinate Mg(2+). Zn(2+) is bound by residues Cys-819, Cys-893, Cys-900, and Cys-903. Residues 1392 to 1413 (EEAFDFGTPSAPAEEPQHPAAE) form a disordered region.

The protein belongs to the RNA polymerase beta' chain family. As to quaternary structure, the RNAP catalytic core consists of 2 alpha, 1 beta, 1 beta' and 1 omega subunit. When a sigma factor is associated with the core the holoenzyme is formed, which can initiate transcription. Requires Mg(2+) as cofactor. Zn(2+) serves as cofactor.

It catalyses the reaction RNA(n) + a ribonucleoside 5'-triphosphate = RNA(n+1) + diphosphate. Functionally, DNA-dependent RNA polymerase catalyzes the transcription of DNA into RNA using the four ribonucleoside triphosphates as substrates. This is DNA-directed RNA polymerase subunit beta' from Burkholderia cenocepacia (strain ATCC BAA-245 / DSM 16553 / LMG 16656 / NCTC 13227 / J2315 / CF5610) (Burkholderia cepacia (strain J2315)).